Consider the following 208-residue polypeptide: Large ribosomal subunit protein bL25 (208 aa).

Residues 186–201 (PAGEKSAAAEEGAAAA) show a composition bias toward low complexity. Residues 186–208 (PAGEKSAAAEEGAAAAGEDKPAA) are disordered.

This sequence belongs to the bacterial ribosomal protein bL25 family. CTC subfamily. Part of the 50S ribosomal subunit; part of the 5S rRNA/L5/L18/L25 subcomplex. Contacts the 5S rRNA. Binds to the 5S rRNA independently of L5 and L18.

This is one of the proteins that binds to the 5S RNA in the ribosome where it forms part of the central protuberance. The polypeptide is Large ribosomal subunit protein bL25 (Ralstonia pickettii (strain 12J)).